Here is a 191-residue protein sequence, read N- to C-terminus: UPF0302 protein SA1295 (191 aa).

This sequence belongs to the UPF0302 family.

The protein is UPF0302 protein SA1295 of Staphylococcus aureus (strain N315).